Reading from the N-terminus, the 327-residue chain is Phenylalanine--tRNA ligase alpha subunit (327 aa).

Glu-252 contributes to the Mg(2+) binding site.

The protein belongs to the class-II aminoacyl-tRNA synthetase family. Phe-tRNA synthetase alpha subunit type 1 subfamily. Tetramer of two alpha and two beta subunits. It depends on Mg(2+) as a cofactor.

Its subcellular location is the cytoplasm. The catalysed reaction is tRNA(Phe) + L-phenylalanine + ATP = L-phenylalanyl-tRNA(Phe) + AMP + diphosphate + H(+). This chain is Phenylalanine--tRNA ligase alpha subunit, found in Klebsiella pneumoniae subsp. pneumoniae (strain ATCC 700721 / MGH 78578).